We begin with the raw amino-acid sequence, 816 residues long: Phosphatidylinositol 4-kinase beta (816 aa).

Disordered stretches follow at residues 1-30 (MGDT…GSLL), 101-120 (EDEM…RRRR), and 248-318 (AHRK…SFSS). N-acetylglycine is present on Gly2. The tract at residues 2-68 (GDTIVEPAPL…VKLLHGGVAI (67 aa)) is interaction with ACBD3. Positions 29 to 242 (LLSVITEGVG…GTKLRKLILS (214 aa)) constitute a PIK helical domain. The residue at position 258 (Ser258) is a Phosphoserine. Thr263 bears the Phosphothreonine mark. Phosphoserine is present on residues Ser266, Ser275, Ser277, Ser284, and Ser294. Polar residues-rich tracts occupy residues 278-297 (DATA…SNPK) and 306-318 (SSST…SFSS). Ser428 carries the phosphoserine modification. Position 438 is a phosphothreonine (Thr438). At Ser511 the chain carries Phosphoserine. Thr517 and Thr519 each carry phosphothreonine. In terms of domain architecture, PI3K/PI4K catalytic spans 535-801 (EPWQEKVRRI…MVDGSMRSIT (267 aa)). Residues 541–547 (VRRIREG) are G-loop. A catalytic loop region spans residues 668–676 (QVKDRHNGN). The interval 687 to 711 (HIDFGFILSSSPRNLGFETSAFKLT) is activation loop.

The protein belongs to the PI3/PI4-kinase family. Type III PI4K subfamily. As to quaternary structure, interacts with ARF1 and ARF3 in the Golgi complex, but not with ARF4, ARF5 or ARF6. Interacts with NCS1/FREQ in a calcium-independent manner. Interacts with CALN1/CABP8 and CALN2/CABP7; in a calcium-dependent manner; this interaction competes with NCS1/FREQ binding. Interacts with ACBD3. Interacts with ARMH3, YWHAB, YWHAE, YWHAG, YWHAH, YWHAQ, YWHAZ and SFN. Interacts with GGA2 (via VHS domain); the interaction is important for PI4KB location at the Golgi apparatus membrane. Interacts with ATG9A. The cofactor is Mg(2+). Mn(2+) is required as a cofactor.

It is found in the endomembrane system. Its subcellular location is the mitochondrion outer membrane. It localises to the rough endoplasmic reticulum membrane. The protein localises to the golgi apparatus. The protein resides in the golgi apparatus membrane. It catalyses the reaction a 1,2-diacyl-sn-glycero-3-phospho-(1D-myo-inositol) + ATP = a 1,2-diacyl-sn-glycero-3-phospho-(1D-myo-inositol 4-phosphate) + ADP + H(+). Its activity is regulated as follows. Inhibited by wortmannin. Increased kinase activity upon interaction with NCS1/FREQ. In terms of biological role, phosphorylates phosphatidylinositol (PI) in the first committed step in the production of the second messenger inositol-1,4,5,-trisphosphate (PIP). May regulate Golgi disintegration/reorganization during mitosis, possibly via its phosphorylation. Involved in Golgi-to-plasma membrane trafficking. In Bos taurus (Bovine), this protein is Phosphatidylinositol 4-kinase beta (PI4KB).